We begin with the raw amino-acid sequence, 111 residues long: Beta-2-microglobulin (111 aa).

Residues 1 to 17 form the signal peptide; it reads MRALILLSLGLLRVAVP. The 92-residue stretch at 20–111 folds into the Ig-like C1-type domain; that stretch reads PQVVVYTYKP…KTSIYKLESF (92 aa).

This sequence belongs to the beta-2-microglobulin family. As to quaternary structure, heterodimer of an alpha chain and a beta chain. Beta-2-microglobulin is the beta-chain of major histocompatibility complex class I molecules.

The protein localises to the secreted. In terms of biological role, component of the class I major histocompatibility complex (MHC). Involved in the presentation of peptide antigens to the immune system. This is Beta-2-microglobulin (b2m) from Rostroraja eglanteria (Clearnose skate).